Reading from the N-terminus, the 504-residue chain is Hexose transporter 1 (504 aa).

The Cytoplasmic portion of the chain corresponds to 1–29; it reads MTKSSKDICSENEGKKNGKSGFFSTSFKY. A helical membrane pass occupies residues 30–50; sequence VLSACIASFIFGYQVSVLNTI. Residues 51–78 are Extracellular-facing; sequence KNFIVVEFEWCKGEKDRLNCSNNTIQSS. Residues Cys61 and Cys70 are joined by a disulfide bond. The chain crosses the membrane as a helical span at residues 79-99; the sequence is FLLASVFIGAVLGCGFSGYLV. Residues 100–104 are Cytoplasmic-facing; that stretch reads QFGRR. Residues 105–125 form a helical membrane-spanning segment; that stretch reads LSLLIIYNFFFLVSILTSITH. Residues 126-129 are Extracellular-facing; that stretch reads HFHT. A helical membrane pass occupies residues 130–150; that stretch reads ILFARLLSGFGIGLVTVSVPM. Residues 151 to 165 are Cytoplasmic-facing; that stretch reads YISEMTHKDKKGAYG. Residues 166–186 form a helical membrane-spanning segment; it reads VMHQLFITFGIFVAVMLGLAM. Gln169 serves as a coordination point for alpha-D-glucose. Gln169 serves as a coordination point for beta-D-glucose. The Extracellular segment spans residues 187-207; it reads GEGPKADSTEPLTSFAKLWWR. A helical transmembrane segment spans residues 208–228; it reads LMFLFPSVISLIGILALVVFF. Residues 229 to 293 are Cytoplasmic-facing; the sequence is KEETPYFLFE…SALKIPSYRY (65 aa). A helical transmembrane segment spans residues 294 to 314; the sequence is VIILGCLLSGLQQFTGINVLV. Positions 305, 306, and 311 each coordinate alpha-D-glucose. A beta-D-glucose-binding site is contributed by Gln305. Asn311 contacts beta-D-glucose. At 315 to 331 the chain is on the extracellular side; that stretch reads SNSNELYKEFLDSHLIT. A helical membrane pass occupies residues 332–352; sequence ILSVVMTAVNFLMTFPAIYIV. Beta-D-glucose is bound at residue Asn341. Over 353–358 the chain is Cytoplasmic; the sequence is EKLGRK. The chain crosses the membrane as a helical span at residues 359–379; it reads TLLLWGCVGVLVAYLPTAIAN. At 380–392 the chain is on the extracellular side; that stretch reads EINRNSNFVKILS. A helical transmembrane segment spans residues 393-413; sequence IVATFVMIISFAVSYGPVLWI. Trp412 is a binding site for alpha-D-glucose. Topologically, residues 414–429 are cytoplasmic; the sequence is YLHEMFPSEIKDSAAS. A helical transmembrane segment spans residues 430-450; sequence LASLVNWVCAIIVVFPSDIII. At 451 to 455 the chain is on the extracellular side; sequence KKSPS. A helical transmembrane segment spans residues 456–476; the sequence is ILFIVFSVMSILTFFFIFFFI. The Cytoplasmic segment spans residues 477-504; the sequence is KETKGGEIGTSPYITMEERQKHMTKSVV.

It belongs to the major facilitator superfamily. Sugar transporter (TC 2.A.1.1) family. As to quaternary structure, homodimer.

The protein resides in the cell membrane. The enzyme catalyses D-glucose(out) = D-glucose(in). The catalysed reaction is D-fructose(out) = D-fructose(in). It catalyses the reaction D-galactose(in) = D-galactose(out). It carries out the reaction D-mannose(out) = D-mannose(in). The enzyme catalyses D-glucosamine(out) = D-glucosamine(in). The catalysed reaction is D-xylose(out) = D-xylose(in). Inhibited by cytochalasin B. Inhibited by compound 3361 (3-O-((undec-10-en)-1-yl)-D-glucose). Inhibited by compound HTI-1. Its function is as follows. Sodium-independent facilitative hexose transporter. Can transport D-glucose and D-fructose. Can transport D-mannose, D-galactose, D-xylose and D-glucosamine. This chain is Hexose transporter 1, found in Plasmodium falciparum (isolate 3D7).